The sequence spans 959 residues: Probable serine/threonine-protein kinase DDB_G0291664 (959 aa).

Residues 154–213 form a disordered region; that stretch reads QQQQQQQLTPPPSPPLLPIPQPPAQNEEQQLTQPPSIPPPQQKQIKIQKSDRGTQVKSIT. Over residues 162-176 the composition is skewed to pro residues; the sequence is TPPPSPPLLPIPQPP. ANK repeat units follow at residues 294–324 and 333–362; these read KGET…CMGI and LNKN…PLKM. The Protein kinase domain occupies 482-762; it reads IDFHTQIGSA…EVGIIETEFL (281 aa). ATP contacts are provided by residues 488-496 and Lys-509; that span reads IGSAGNASV. The active-site Proton acceptor is the Asp-610. The disordered stretch occupies residues 904–959; the sequence is NNINNNNNNNNNCNNSKKFKTTSESTSALGSDASSSSSPSSSSPSPKYSASIYHHQ.

Belongs to the protein kinase superfamily. Ser/Thr protein kinase family.

It carries out the reaction L-seryl-[protein] + ATP = O-phospho-L-seryl-[protein] + ADP + H(+). The catalysed reaction is L-threonyl-[protein] + ATP = O-phospho-L-threonyl-[protein] + ADP + H(+). This chain is Probable serine/threonine-protein kinase DDB_G0291664, found in Dictyostelium discoideum (Social amoeba).